The primary structure comprises 488 residues: Glutamyl-tRNA(Gln) amidotransferase subunit A (488 aa).

Residues Lys77 and Ser152 each act as charge relay system in the active site. Residue Ser176 is the Acyl-ester intermediate of the active site.

The protein belongs to the amidase family. GatA subfamily. In terms of assembly, heterotrimer of A, B and C subunits.

It catalyses the reaction L-glutamyl-tRNA(Gln) + L-glutamine + ATP + H2O = L-glutaminyl-tRNA(Gln) + L-glutamate + ADP + phosphate + H(+). In terms of biological role, allows the formation of correctly charged Gln-tRNA(Gln) through the transamidation of misacylated Glu-tRNA(Gln) in organisms which lack glutaminyl-tRNA synthetase. The reaction takes place in the presence of glutamine and ATP through an activated gamma-phospho-Glu-tRNA(Gln). This is Glutamyl-tRNA(Gln) amidotransferase subunit A from Streptococcus thermophilus (strain CNRZ 1066).